The chain runs to 594 residues: Jacalin-related lectin 44 (594 aa).

The interval 1-23 is disordered; sequence MIQKLGAKGIKSDERNQREWDDG. Jacalin-type lectin domains follow at residues 2–148, 151–293, 296–441, and 448–588; these read IQKL…YFIS, PTRL…YFST, PNKL…YYRP, and VKRL…HVIP. Positions 10-23 are enriched in basic and acidic residues; it reads IKSDERNQREWDDG.

Belongs to the jacalin lectin family.

The polypeptide is Jacalin-related lectin 44 (JAL44) (Arabidopsis thaliana (Mouse-ear cress)).